The primary structure comprises 102 residues: 10 kDa heat shock protein, mitochondrial (102 aa).

A2 carries the N-acetylalanine modification. The residue at position 8 (K8) is an N6-acetyllysine. The residue at position 28 (K28) is an N6-succinyllysine. K40 is modified (N6-acetyllysine; alternate). 3 positions are modified to N6-malonyllysine; alternate: K40, K54, and K56. K40, K54, and K56 each carry N6-succinyllysine; alternate. K56 bears the N6-acetyllysine; alternate mark. Position 57 is a phosphoserine (S57). 2 positions are modified to N6-acetyllysine; alternate: K66 and K70. 2 positions are modified to N6-succinyllysine; alternate: K66 and K70. T79 is modified (phosphothreonine). An N6-acetyllysine; alternate mark is found at K80 and K86. 2 positions are modified to N6-succinyllysine; alternate: K80 and K86. K99 is modified (N6-acetyllysine).

This sequence belongs to the GroES chaperonin family. Homoheptamer arranged in a ring structure. 2 heptameric Hsp10 rings interact with a Hsp60 tetradecamer in the structure of a back-to-back double heptameric ring to form the symmetrical football complex.

The protein localises to the mitochondrion matrix. Its function is as follows. Co-chaperonin implicated in mitochondrial protein import and macromolecular assembly. Together with Hsp60, facilitates the correct folding of imported proteins. May also prevent misfolding and promote the refolding and proper assembly of unfolded polypeptides generated under stress conditions in the mitochondrial matrix. The functional units of these chaperonins consist of heptameric rings of the large subunit Hsp60, which function as a back-to-back double ring. In a cyclic reaction, Hsp60 ring complexes bind one unfolded substrate protein per ring, followed by the binding of ATP and association with 2 heptameric rings of the co-chaperonin Hsp10. This leads to sequestration of the substrate protein in the inner cavity of Hsp60 where, for a certain period of time, it can fold undisturbed by other cell components. Synchronous hydrolysis of ATP in all Hsp60 subunits results in the dissociation of the chaperonin rings and the release of ADP and the folded substrate protein. The sequence is that of 10 kDa heat shock protein, mitochondrial (Hspe1) from Mus musculus (Mouse).